The sequence spans 626 residues: Kinesin-like protein Klp59C (626 aa).

The globular stretch occupies residues Met1–Ile183. A disordered region spans residues Cys68–Asn155. A compositionally biased stretch (polar residues) spans Asn72–Leu96. The span at Ala101–Pro112 shows a compositional bias: low complexity. A compositionally biased stretch (basic and acidic residues) spans Val113–Asp150. Residues Glu115–Asp150 are a coiled coil. In terms of domain architecture, Kinesin motor spans Gln187–Leu521. Gly277–Thr284 contacts ATP. The interval Ala557 to Glu608 is disordered.

It belongs to the TRAFAC class myosin-kinesin ATPase superfamily. Kinesin family. MCAK/KIF2 subfamily.

The protein resides in the chromosome. Its subcellular location is the centromere. It is found in the kinetochore. It localises to the cytoplasm. The protein localises to the cytoskeleton. The protein resides in the spindle pole. Functionally, required during anaphase to drive sister chromatid separation to actively depolymerize kinetochore microtubules at their kinetochore-associated plus ends, thereby contributing to chromatid mobility through a 'Pac-man' mechanism. The polypeptide is Kinesin-like protein Klp59C (Klp59C) (Drosophila melanogaster (Fruit fly)).